We begin with the raw amino-acid sequence, 492 residues long: Cobyric acid synthase (492 aa).

The GATase cobBQ-type domain occupies 252-440 (RPKIAVLAYP…VHGLFADDHL (189 aa)). Residue Cys-334 is the Nucleophile of the active site. His-432 is an active-site residue.

Belongs to the CobB/CobQ family. CobQ subfamily.

Its pathway is cofactor biosynthesis; adenosylcobalamin biosynthesis. In terms of biological role, catalyzes amidations at positions B, D, E, and G on adenosylcobyrinic A,C-diamide. NH(2) groups are provided by glutamine, and one molecule of ATP is hydrogenolyzed for each amidation. In Bradyrhizobium sp. (strain BTAi1 / ATCC BAA-1182), this protein is Cobyric acid synthase.